The chain runs to 796 residues: Striatin-3 (796 aa).

N-acetylmethionine is present on Met-1. Residues 1 to 13 show a composition bias toward gly residues; it reads MDELAGGGGGGQG. Residues 1–60 form a disordered region; sequence MDELAGGGGGGQGMAAPPRPQQGPGGNLSLPPGANGAPGGGGPPAAEAAGPPAGPELSRP. The interval 71–79 is caveolin-binding; sequence YIQHEWARF. A coiled-coil region spans residues 77–136; that stretch reads ARFEMERAHWEVERAELQARIAFLQGERKGQENLKKDLVRRIKMLEYALKQERAKYHKLK. Residue Thr-150 is modified to Phosphothreonine. Residues 166–183 are calmodulin-binding; it reads QNSQLTWKQGRQLLRQYL. Residues Ser-202, Ser-214, Ser-229, Ser-257, and Ser-334 each carry the phosphoserine modification. 2 disordered regions span residues 252 to 271 and 311 to 335; these read ENAD…IPEG and EDGE…DLSP. Acidic residues predominate over residues 253-264; it reads NADDSDEEENDM. WD repeat units lie at residues 477-516, 530-569, 583-622, 678-717, 720-759, and 766-795; these read SHFD…PAKK, AHIG…VDPY, AHTD…PCVC, QSSN…MIHS, AHLD…CVQE, and KLDE…AKVF.

Belongs to the WD repeat striatin family. Tetramerizes. Part of the core of STRIPAK complexes composed of PP2A catalytic and scaffolding subunits, the striatins (PP2A regulatory subunits), the striatin-associated proteins MOB4, STRIP1 and STRIP2, PDCD10 and members of the STE20 kinases, such as STK24 and STK26. The STRIPAK complex can be extended by adapter proteins such as SLMAP:SIKE1 or CTTNBP2NL. Interacts with CDC42BPB. Mainly expressed in the brain and muscles but is also detected at low levels in various tissues such as kidney, spleen and lung.

Its subcellular location is the cytoplasm. The protein localises to the membrane. Functionally, calmodulin-binding scaffolding protein which is the center of the striatin-interacting phosphatase and kinase (STRIPAK) complexes. STRIPAK complexes have critical roles in protein (de)phosphorylation and are regulators of multiple signaling pathways including Hippo, MAPK, nuclear receptor and cytoskeleton remodeling. Different types of STRIPAK complexes are involved in a variety of biological processes such as cell growth, differentiation, apoptosis, metabolism and immune regulation. The polypeptide is Striatin-3 (Strn3) (Mus musculus (Mouse)).